Reading from the N-terminus, the 369-residue chain is MTIDFRTETTFGYTTGACAVSGAYSALYFLKNNKKLDFVEILNLKNETLIIPIQNIERSENTAFATVKKFSGKDIDITNNMTINVEVTLQKLDNNSNLKLIEIFGGNGVGIVTKRGLQIDVGDYAINPKPREMIEKNLISLLNDGEKAVVRISIPNGDEISKKTLNPKLGIIGGISILGTTGIVRPMSNDAYKESLLPQIDIAIQNGFENLVFVPGNIGTKYAKSVLNIEEDQIIEVSNFWGFMLEKAGEKGVKDITVFGHAGKIVKLAGGIFDTHSKVSDARNEILCAYTSTLCNNQELMKKILQSNTTEEIIEILAEKDILNEVFNLISKRVVERLCLRFPNIKFSCIIVDINGKILGKCFLGDRFD.

Belongs to the CbiD family.

The catalysed reaction is Co-precorrin-5B + S-adenosyl-L-methionine = Co-precorrin-6A + S-adenosyl-L-homocysteine. It participates in cofactor biosynthesis; adenosylcobalamin biosynthesis; cob(II)yrinate a,c-diamide from sirohydrochlorin (anaerobic route): step 6/10. In terms of biological role, catalyzes the methylation of C-1 in cobalt-precorrin-5B to form cobalt-precorrin-6A. This is Cobalt-precorrin-5B C(1)-methyltransferase from Methanococcus vannielii (strain ATCC 35089 / DSM 1224 / JCM 13029 / OCM 148 / SB).